The chain runs to 317 residues: tRNA dimethylallyltransferase (317 aa).

Glycine 14–threonine 21 contacts ATP. Residue threonine 16 to threonine 21 participates in substrate binding. 2 interaction with substrate tRNA regions span residues aspartate 39 to leucine 42 and glutamine 163 to arginine 167.

The protein belongs to the IPP transferase family. As to quaternary structure, monomer. The cofactor is Mg(2+).

It catalyses the reaction adenosine(37) in tRNA + dimethylallyl diphosphate = N(6)-dimethylallyladenosine(37) in tRNA + diphosphate. Its function is as follows. Catalyzes the transfer of a dimethylallyl group onto the adenine at position 37 in tRNAs that read codons beginning with uridine, leading to the formation of N6-(dimethylallyl)adenosine (i(6)A). The sequence is that of tRNA dimethylallyltransferase from Stenotrophomonas maltophilia (strain K279a).